The sequence spans 250 residues: 2,3-bisphosphoglycerate-dependent phosphoglycerate mutase (250 aa).

Residues 10–17 (RHGESEWN), 23–24 (TG), R62, 89–92 (ERHY), K100, 116–117 (RR), and 185–186 (GN) contribute to the substrate site. H11 serves as the catalytic Tele-phosphohistidine intermediate. The active-site Proton donor/acceptor is the E89.

It belongs to the phosphoglycerate mutase family. BPG-dependent PGAM subfamily. As to quaternary structure, homodimer.

The enzyme catalyses (2R)-2-phosphoglycerate = (2R)-3-phosphoglycerate. Its pathway is carbohydrate degradation; glycolysis; pyruvate from D-glyceraldehyde 3-phosphate: step 3/5. Catalyzes the interconversion of 2-phosphoglycerate and 3-phosphoglycerate. The polypeptide is 2,3-bisphosphoglycerate-dependent phosphoglycerate mutase (Edwardsiella ictaluri (strain 93-146)).